The following is a 320-amino-acid chain: Acetyl-coenzyme A carboxylase carboxyl transferase subunit alpha (320 aa).

Residues 42-295 (IEEKAVQALN…GDAIAAAFAE (254 aa)) form the CoA carboxyltransferase C-terminal domain.

It belongs to the AccA family. In terms of assembly, acetyl-CoA carboxylase is a heterohexamer composed of biotin carboxyl carrier protein (AccB), biotin carboxylase (AccC) and two subunits each of ACCase subunit alpha (AccA) and ACCase subunit beta (AccD).

Its subcellular location is the cytoplasm. The catalysed reaction is N(6)-carboxybiotinyl-L-lysyl-[protein] + acetyl-CoA = N(6)-biotinyl-L-lysyl-[protein] + malonyl-CoA. The protein operates within lipid metabolism; malonyl-CoA biosynthesis; malonyl-CoA from acetyl-CoA: step 1/1. Functionally, component of the acetyl coenzyme A carboxylase (ACC) complex. First, biotin carboxylase catalyzes the carboxylation of biotin on its carrier protein (BCCP) and then the CO(2) group is transferred by the carboxyltransferase to acetyl-CoA to form malonyl-CoA. The chain is Acetyl-coenzyme A carboxylase carboxyl transferase subunit alpha from Rhodopseudomonas palustris (strain HaA2).